The primary structure comprises 167 residues: Xanthine-guanine phosphoribosyltransferase (167 aa).

Residues 47 to 48 (RG), Gln79, and 102 to 110 (DDLVDSGKT) each bind 5-phospho-alpha-D-ribose 1-diphosphate. A GMP-binding site is contributed by Gln79. Asp103 is a Mg(2+) binding site. Asp106 and Ile149 together coordinate guanine. 2 residues coordinate xanthine: Asp106 and Ile149. GMP is bound by residues 106–110 (DSGKT) and 148–149 (WI).

The protein belongs to the purine/pyrimidine phosphoribosyltransferase family. XGPT subfamily. As to quaternary structure, homotetramer. Mg(2+) serves as cofactor.

Its subcellular location is the cell inner membrane. The catalysed reaction is GMP + diphosphate = guanine + 5-phospho-alpha-D-ribose 1-diphosphate. The enzyme catalyses XMP + diphosphate = xanthine + 5-phospho-alpha-D-ribose 1-diphosphate. It carries out the reaction IMP + diphosphate = hypoxanthine + 5-phospho-alpha-D-ribose 1-diphosphate. It functions in the pathway purine metabolism; GMP biosynthesis via salvage pathway; GMP from guanine: step 1/1. The protein operates within purine metabolism; XMP biosynthesis via salvage pathway; XMP from xanthine: step 1/1. Its function is as follows. Purine salvage pathway enzyme that catalyzes the transfer of the ribosyl-5-phosphate group from 5-phospho-alpha-D-ribose 1-diphosphate (PRPP) to the N9 position of the 6-oxopurines guanine and xanthine to form the corresponding ribonucleotides GMP (guanosine 5'-monophosphate) and XMP (xanthosine 5'-monophosphate), with the release of PPi. To a lesser extent, also acts on hypoxanthine. This chain is Xanthine-guanine phosphoribosyltransferase, found in Cereibacter sphaeroides (strain ATCC 17025 / ATH 2.4.3) (Rhodobacter sphaeroides).